Reading from the N-terminus, the 1352-residue chain is Inhibitor of Bruton tyrosine kinase (1352 aa).

ANK repeat units follow at residues 51–80 (FGRN…DLLV) and 85–114 (SGWT…SLYM). 3 RCC1 repeats span residues 141–194 (PTEV…FLSQ), 195–246 (KGQV…VLTD), and 248–301 (GCVY…LWTR). The region spanning 565-645 (HDVTFQVGNR…MYTDTCDLLT (81 aa)) is the BTB 1 domain. The disordered stretch occupies residues 692 to 716 (AHTLSERQKSKPKSSKKGKGVGDDD). Over residues 701-710 (SKPKSSKKGK) the composition is skewed to basic residues. The 69-residue stretch at 769-837 (YDVTMKSVDG…LYTDEAVVIK (69 aa)) folds into the BTB 2 domain. The tract at residues 976–1002 (FKKAKTRAKKKPRKRSDSSGGYTLSDV) is disordered. Positions 977 to 989 (KKAKTRAKKKPRK) are enriched in basic residues. Ser-991 bears the Phosphoserine mark. A compositionally biased stretch (polar residues) spans 993–1002 (SSGGYTLSDV). Phosphoserine occurs at positions 1005, 1031, 1034, 1040, 1046, 1055, 1084, 1111, 1113, and 1116. Residues 1032–1094 (EGSYAGVASP…PTTKSAPQFI (63 aa)) form a disordered region. The span at 1084-1094 (SPTTKSAPQFI) shows a compositional bias: polar residues.

As to quaternary structure, interacts with the PH domain of BTK.

It localises to the cytoplasm. The protein resides in the membrane. Acts as an inhibitor of BTK tyrosine kinase activity, thereby playing a role in B-cell development. Down-regulates BTK kinase activity, leading to interference with BTK-mediated calcium mobilization and NF-kappa-B-driven transcription. The polypeptide is Inhibitor of Bruton tyrosine kinase (Ibtk) (Mus musculus (Mouse)).